The following is a 432-amino-acid chain: Adenosylhomocysteinase (432 aa).

N-acetylserine is present on Ser2. 3 residues coordinate substrate: Thr57, Asp131, and Glu156. At Ser183 the chain carries Phosphoserine. An NAD binding region spans residues 183–350 (SVTKSKFDNL…EGRLVNLGCA (168 aa)). Lys186 and Asp190 together coordinate substrate. The residue at position 186 (Lys186) is an N6-(2-hydroxyisobutyryl)lysine. Tyr193 bears the Phosphotyrosine mark.

It belongs to the adenosylhomocysteinase family. Homotetramer. Interaction with AHCYL1. The cofactor is NAD(+).

It is found in the cytoplasm. It localises to the melanosome. The protein localises to the nucleus. Its subcellular location is the endoplasmic reticulum. It catalyses the reaction S-adenosyl-L-homocysteine + H2O = L-homocysteine + adenosine. The protein operates within amino-acid biosynthesis; L-homocysteine biosynthesis; L-homocysteine from S-adenosyl-L-homocysteine: step 1/1. In terms of biological role, catalyzes the hydrolysis of S-adenosyl-L-homocysteine to form adenosine and homocysteine. Binds copper ions. This chain is Adenosylhomocysteinase (AHCY), found in Bos taurus (Bovine).